We begin with the raw amino-acid sequence, 362 residues long: 3-isopropylmalate dehydrogenase (362 aa).

77 to 88 (GPKWGTGAVRPE) contributes to the NAD(+) binding site. The substrate site is built by R95, R105, R134, and D223. The Mg(2+) site is built by D223, D248, and D252. NAD(+) is bound at residue 287–298 (GSAPDLPPNKVN).

This sequence belongs to the isocitrate and isopropylmalate dehydrogenases family. As to quaternary structure, homodimer. The cofactor is Mg(2+). It depends on Mn(2+) as a cofactor.

The protein localises to the cytoplasm. It carries out the reaction (2R,3S)-3-isopropylmalate + NAD(+) = 4-methyl-2-oxopentanoate + CO2 + NADH. The protein operates within amino-acid biosynthesis; L-leucine biosynthesis; L-leucine from 3-methyl-2-oxobutanoate: step 3/4. Catalyzes the oxidation of 3-carboxy-2-hydroxy-4-methylpentanoate (3-isopropylmalate) to 3-carboxy-4-methyl-2-oxopentanoate. The product decarboxylates to 4-methyl-2 oxopentanoate. This chain is 3-isopropylmalate dehydrogenase (LEU2), found in Blastobotrys adeninivorans (Yeast).